The primary structure comprises 113 residues: UPF0102 protein SUN_0231 (113 aa).

Belongs to the UPF0102 family.

The chain is UPF0102 protein SUN_0231 from Sulfurovum sp. (strain NBC37-1).